Consider the following 466-residue polypeptide: Argininosuccinate lyase 1 (466 aa).

Belongs to the lyase 1 family. Argininosuccinate lyase subfamily.

The protein localises to the cytoplasm. It catalyses the reaction 2-(N(omega)-L-arginino)succinate = fumarate + L-arginine. It functions in the pathway amino-acid biosynthesis; L-arginine biosynthesis; L-arginine from L-ornithine and carbamoyl phosphate: step 3/3. This Agrobacterium fabrum (strain C58 / ATCC 33970) (Agrobacterium tumefaciens (strain C58)) protein is Argininosuccinate lyase 1.